The primary structure comprises 285 residues: Bifunctional protein FolD (285 aa).

Residues 166 to 168 (GAS) and Ile232 contribute to the NADP(+) site.

The protein belongs to the tetrahydrofolate dehydrogenase/cyclohydrolase family. As to quaternary structure, homodimer.

It carries out the reaction (6R)-5,10-methylene-5,6,7,8-tetrahydrofolate + NADP(+) = (6R)-5,10-methenyltetrahydrofolate + NADPH. The catalysed reaction is (6R)-5,10-methenyltetrahydrofolate + H2O = (6R)-10-formyltetrahydrofolate + H(+). Its pathway is one-carbon metabolism; tetrahydrofolate interconversion. In terms of biological role, catalyzes the oxidation of 5,10-methylenetetrahydrofolate to 5,10-methenyltetrahydrofolate and then the hydrolysis of 5,10-methenyltetrahydrofolate to 10-formyltetrahydrofolate. The polypeptide is Bifunctional protein FolD (Pseudoalteromonas atlantica (strain T6c / ATCC BAA-1087)).